The primary structure comprises 521 residues: Medium/long-chain-fatty-acid--[acyl-carrier-protein] ligase MbtM (521 aa).

The protein belongs to the ATP-dependent AMP-binding enzyme family.

The catalysed reaction is a long-chain fatty acid + holo-[ACP] + ATP = a long-chain fatty acyl-[ACP] + AMP + diphosphate. The enzyme catalyses a medium-chain fatty acid + holo-[ACP] + ATP = a medium-chain fatty acyl-[ACP] + AMP + diphosphate. The protein operates within siderophore biosynthesis; mycobactin biosynthesis. Its function is as follows. Activates lipidic moieties required for mycobactin biosynthesis. Converts medium- to long-chain aliphatic fatty acids into acyl adenylate, which is further transferred on to the phosphopantetheine arm of the carrier protein MbtL. This Mycobacterium sp. (strain MCS) protein is Medium/long-chain-fatty-acid--[acyl-carrier-protein] ligase MbtM (mbtM).